The chain runs to 448 residues: MEGSKASSSTMQVSFVCQRCSQPLKLDTSFKILDRVTIQELTAPLLTTAQAKPGETQEEEANSGEEPFIETRQDGVSRRFIPPARMMSTESANSFTLIGEASDGGTMENLSRRLKVTGDLFDIMSGQTDVDHPLCEECTDTLLDQLDTQLNVTENECQNYKRCLEILEQMNEDDSEQLQRELKELALEEERLIQELEDVEKNRKVVAENLEKVQAEAERLDQEEAQYQREYSEFKRQQLELDDELKSVENQVRYAQIQLDKLKKTNVFNATFHIWHSGQFGTINNFRLGRLPSVPVEWNEINAAWGQTVLLLHALANKMGLKFQRYRLVPYGNHSYLESLTDKSKELPLYCSGGLRFFWDNKFDHAMVAFLDCVQQFKEEVEKGETRFCLPYRMDVEKGKIEDTGGSGGSYSIKTQFNSEEQWTKALKFMLTNLKWGLAWVSSQFYNK.

The residue at position 1 (Met1) is an N-acetylmethionine. Phosphoserine occurs at positions 14 and 29. Residues 47-66 (TTAQAKPGETQEEEANSGEE) are disordered. Phosphoserine; by AMPK occurs at positions 88, 91, and 94. The short motif at 106-125 (TMENLSRRLKVTGDLFDIMS) is the BH3 element. Residues 110–157 (LSRRLKVTGDLFDIMSGQTDVDHPLCEECTDTLLDQLDTQLNVTENEC) form an interaction with BCL2 and BCL2L1 isoform Bcl-X(L) region. At Thr117 the chain carries Phosphothreonine; by DAPK1. Residues 140–268 (DTLLDQLDTQ…LDKLKKTNVF (129 aa)) are a coiled coil. Residues 243-448 (DELKSVENQV…AWVSSQFYNK (206 aa)) form an evolutionary conserved domain (ECD) region. Glycyl lysine isopeptide (Lys-Gly) (interchain with G-Cter in ubiquitin) cross-links involve residues Lys400 and Lys435. Residues 423-448 (WTKALKFMLTNLKWGLAWVSSQFYNK) are required for membrane-association.

Belongs to the beclin family. As to quaternary structure, a homodimeric form is proposed to exist; this metastable form readily transits to ATG14- or UVRAG-containing complexes with BECN1:UVRAG being more stable than BECN1:ATG14. Component of the PI3K (PI3KC3/PI3K-III/class III phosphatidylinositol 3-kinase) complex whose core is composed of the catalytic subunit PIK3C3, the regulatory subunit PIK3R4 and BECN1, and associates with additional regulatory/auxiliary subunits to form alternative complex forms. Accepted alternative complex forms containing a fourth regulatory subunit in a mutually exclusive manner are PI3K complex I (PI3KC3-C1) containing ATG14, and PI3K complex II (PI3KC3-C2) containing UVRAG. PI3KC3-C1 displays a V-shaped architecture with PIK3R4 serving as a bridge between PIK3C3 and the ATG14:BECN1 subcomplex. Both, PI3KC3-C1 and PI3KC3-C2, can associate with further regulatory subunits, such as RUBCN, SH3GLB1/Bif-1 and AMBRA1. PI3KC3-C1 probably associates with PIK3CB. Forms a complex with PPP2CA and AMBRA1; AMBRA1 and BECN1 components of the complex regulate MYC stability via different pathways. Component of the complex, at least composed of LRPPRC, BECN1 and BCL2; the interactions prevent BECN1 from forming an autophagy-inducing complex with PIK3C3. Interacts with AMBRA1, GOPC, GRID2 and PIK3CB. Interacts with BCL2 and BCL2L1 isoform Bcl-X(L); the interaction inhibits BECN1 function in promoting autophagy by interfering with the formation of the PI3K complex. Interacts with cytosolic HMGB1; inhibits the interaction of BECN1 and BCL2 leading to promotion of autophagy. Interacts with USP10, USP13, VMP1, DAPK1. Interacts with the poly-Gln domain of ATXN3; the interaction causes deubiquitination at Lys-400 and stabilizes BECN1. Interacts with SLAMF1. Interacts with TRIM5; the interaction causes activation of BECN1 by causing its dissociation from its inhibitors BCL2 and TAB2. Interacts with active ULK1 (phosphorylated on 'Ser-317') and MEFV simultaneously. Interacts with TRIM50. Interacts with TRIM16. Interacts with WDR81 and WDR91; negatively regulates the PI3 kinase/PI3K activity associated with endosomal membranes. Interacts with LAPTM4B; competes with EGFR for LAPTM4B binding; regulates EGFR activity. Interacts with ATG14; this interaction is increased in the absence of TMEM39A. Interacts with WASHC1; preventing interaction with AMBRA1 and the DCX(AMBRA1) complex and subsequent ubiquitination. Interacts with TRIM17. Interacts with BCL2L10/BCL-B (via BH1 domain). Interacts with SH3BGRL. Interacts with Irgm1; enhancing BECN1-interacting partners and influencing the composition of the BECN1 complex. Interacts with ARMC3. Interacts with LRPPRC. In terms of assembly, (Microbial infection) Interacts with murine gammaherpesvirus 68 M11; the viral protein binds BECN1 with higher affinity than cellular BCL2. Phosphorylation at Thr-117 by DAPK1 reduces its interaction with BCL2 and BCL2L1 and promotes induction of autophagy. In response to autophagic stimuli, phosphorylated at serine residues by AMPK in an ATG14-dependent manner, and this phosphorylation is critical for maximally efficient autophagy. Post-translationally, polyubiquitinated by NEDD4, both with 'Lys-11'- and 'Lys-63'-linkages. 'Lys-11'-linked polyubiquitination leads to degradation and is enhanced when the stabilizing interaction partner VPS34 is depleted. Deubiquitinated by USP10 and USP13, leading to stabilize the PIK3C3/VPS34-containing complexes. Polyubiquitinated at Lys-400 with 'Lys-48'-linkages. 'Lys-48'-linked poyubiquitination of Lys-400 leads to degradation. Deubiquitinated by ATXN3, leading to stabilization. Ubiquitinated at Lys-435 via 'Lys-63'-linkage by the DCX(AMBRA1) complex, thereby increasing the association between BECN1 and PIK3C3 to promote PIK3C3 activity. 'Lys-48'-linked ubiquitination by RNF216 leads to proteasomal degradation and autophagy inhibition. In terms of processing, proteolytically processed by caspases including CASP8 and CASP3; the C-terminal fragments lack autophagy-inducing capacity and are proposed to induce apoptosis. Thus the cleavage is proposed to be an determinant to switch from autophagy to apoptosis pathways affecting cellular homeostasis including viral infections and survival of tumor cells.

The protein localises to the cytoplasm. The protein resides in the golgi apparatus. Its subcellular location is the trans-Golgi network membrane. It is found in the endosome membrane. It localises to the endoplasmic reticulum membrane. The protein localises to the mitochondrion membrane. The protein resides in the endosome. Its subcellular location is the cytoplasmic vesicle. It is found in the autophagosome. It localises to the mitochondrion. The protein localises to the nucleus. In terms of biological role, plays a central role in autophagy. Acts as a core subunit of different PI3K complex forms that mediate formation of phosphatidylinositol 3-phosphate and are believed to play a role in multiple membrane trafficking pathways: PI3KC3-C1 is involved in initiation of autophagosomes and PI3KC3-C2 in maturation of autophagosomes and endocytosis. Involved in regulation of degradative endocytic trafficking and required for the abscission step in cytokinesis, probably in the context of PI3KC3-C2. Essential for the formation of PI3KC3-C2 but not PI3KC3-C1 PI3K complex forms. Involved in endocytosis including endosome formation in neuronal cells. May play a role in antiviral host defense. Its function is as follows. Beclin-1-C 35 kDa localized to mitochondria can promote apoptosis; it induces the mitochondrial translocation of BAX and the release of proapoptotic factors. This is Beclin-1 (Becn1) from Mus musculus (Mouse).